Consider the following 236-residue polypeptide: Pyridoxine 5'-phosphate synthase (236 aa).

Asn6 provides a ligand contact to 3-amino-2-oxopropyl phosphate. 8-9 (DH) contributes to the 1-deoxy-D-xylulose 5-phosphate binding site. Arg17 contributes to the 3-amino-2-oxopropyl phosphate binding site. The active-site Proton acceptor is His42. 2 residues coordinate 1-deoxy-D-xylulose 5-phosphate: Arg44 and His49. The active-site Proton acceptor is the Glu69. Thr99 contributes to the 1-deoxy-D-xylulose 5-phosphate binding site. His190 serves as the catalytic Proton donor. 3-amino-2-oxopropyl phosphate-binding positions include Gly191 and 212–213 (GH).

The protein belongs to the PNP synthase family. As to quaternary structure, homooctamer; tetramer of dimers.

It localises to the cytoplasm. The enzyme catalyses 3-amino-2-oxopropyl phosphate + 1-deoxy-D-xylulose 5-phosphate = pyridoxine 5'-phosphate + phosphate + 2 H2O + H(+). Its pathway is cofactor biosynthesis; pyridoxine 5'-phosphate biosynthesis; pyridoxine 5'-phosphate from D-erythrose 4-phosphate: step 5/5. Catalyzes the complicated ring closure reaction between the two acyclic compounds 1-deoxy-D-xylulose-5-phosphate (DXP) and 3-amino-2-oxopropyl phosphate (1-amino-acetone-3-phosphate or AAP) to form pyridoxine 5'-phosphate (PNP) and inorganic phosphate. The sequence is that of Pyridoxine 5'-phosphate synthase from Prosthecochloris aestuarii (strain DSM 271 / SK 413).